The chain runs to 172 residues: C-phycocyanin beta chain (172 aa).

Residue asparagine 72 is modified to N4-methylasparagine. (2R,3E)-phycocyanobilin contacts are provided by cysteine 82 and cysteine 153.

It belongs to the phycobiliprotein family. As to quaternary structure, heterodimer of an alpha and a beta subunit, which further assembles into trimers and the trimers into hexamers. The basic functional unit of phycobiliproteins is a ring-shaped hexamer formed from two back-to-back trimers contacting via the alpha chain subunits. The trimers are composed of alpha/beta subunit heterodimers arranged around a three-fold axis of symmetry. The phycoerythrins also contain a gamma subunit which is located in the center of the hexamer. Post-translationally, contains two covalently linked bilin chromophores.

The protein localises to the plastid. Its subcellular location is the chloroplast thylakoid membrane. Functionally, light-harvesting photosynthetic bile pigment-protein from the phycobiliprotein complex (phycobilisome, PBS). Phycocyanin is the major phycobiliprotein in the PBS rod. The polypeptide is C-phycocyanin beta chain (cpcB) (Pyropia haitanensis (Red seaweed)).